We begin with the raw amino-acid sequence, 310 residues long: Olfactory receptor 2A7 (310 aa).

Residues 1–24 (MGNNMTLITEFILLGFPLSPRMQM) lie on the Extracellular side of the membrane. Asn4 carries an N-linked (GlcNAc...) asparagine glycan. A helical transmembrane segment spans residues 25–45 (LLFALFSLFYAFTLLGNGTIV). At 46 to 53 (GLICLDSR) the chain is on the cytoplasmic side. The chain crosses the membrane as a helical span at residues 54–74 (LHTPMYFFLSHLAIVDIAYAC). Residues 75–96 (NTVPQMLVNLLDPVKPISYAGC) lie on the Extracellular side of the membrane. Cys96 and Cys178 are joined by a disulfide. The chain crosses the membrane as a helical span at residues 97–117 (MTQTFLFLTFAITECLLLVVM). At 118–148 (SYDRYVAICHPLRYSAIMSWRVCSTMAVTSW) the chain is on the cytoplasmic side. Residues 149 to 169 (IIGVLLSLIHLVLLLPLPFCV) traverse the membrane as a helical segment. Over 170–204 (SQKVNHFFCEITAILKLACADTHLNETMVLAGAVS) the chain is Extracellular. Asn194 carries N-linked (GlcNAc...) asparagine glycosylation. Residues 205–225 (VLVGPFSSIVVSYACILGAIL) form a helical membrane-spanning segment. Over 226–239 (KIQSEEGQRKAFST) the chain is Cytoplasmic. A helical membrane pass occupies residues 240 to 260 (CSSHLCVVGLFYGTAIVMYVG). The Extracellular portion of the chain corresponds to 261–273 (PRHGSPKEQKKYL). A helical membrane pass occupies residues 274–291 (LLFHSLFNPMLNPLIYSL). Over 292-310 (RNSDVKNTLKRVLRTQRAL) the chain is Cytoplasmic.

It belongs to the G-protein coupled receptor 1 family. As to expression, olfactory epithelium.

Its subcellular location is the cell membrane. Its function is as follows. Odorant receptor. The sequence is that of Olfactory receptor 2A7 from Mus musculus (Mouse).